A 440-amino-acid chain; its full sequence is Serine/threonine-protein kinase STK11 (440 aa).

The region spanning 49 to 309 (YLMGDLLGEG…IQQIRQHNWF (261 aa)) is the Protein kinase domain. ATP-binding positions include 55-63 (LGEGSYGKV) and K78. Catalysis depends on D176, which acts as the Proton acceptor. 2 positions are modified to phosphothreonine; by autocatalysis: T336 and T365. A disordered region spans residues 370–440 (VPGQVPEEEA…IRKLSTCKQQ (71 aa)). The segment covering 430 to 440 (KIRKLSTCKQQ) has biased composition (basic residues). Residue S435 is modified to Phosphoserine; by PKA.

This sequence belongs to the protein kinase superfamily. CAMK Ser/Thr protein kinase family. LKB1 subfamily. In terms of assembly, catalytic component of a trimeric complex composed of STK11/LKB1, STRAD (STRADA or STRADB) and CAB39/MO25 (CAB39/MO25alpha or CAB39L/MO25beta). Mg(2+) is required as a cofactor. Mn(2+) serves as cofactor. As to expression, ubiquitously expressed in all tissues tested. High levels were observed in duodenum and skeletal muscle, lower levels in liver and pancreas.

It is found in the nucleus. The protein localises to the cytoplasm. The catalysed reaction is L-seryl-[protein] + ATP = O-phospho-L-seryl-[protein] + ADP + H(+). The enzyme catalyses L-threonyl-[protein] + ATP = O-phospho-L-threonyl-[protein] + ADP + H(+). In terms of biological role, tumor suppressor serine/threonine-protein kinase that controls the activity of AMP-activated protein kinase (AMPK) family members, thereby playing a role in various processes such as cell metabolism, cell polarity, apoptosis and DNA damage response. Acts by phosphorylating the T-loop of AMPK family proteins, leading to promote their activity. The sequence is that of Serine/threonine-protein kinase STK11 from Gallus gallus (Chicken).